We begin with the raw amino-acid sequence, 537 residues long: ATP synthase subunit alpha (537 aa).

Residue 174–181 participates in ATP binding; that stretch reads GDRQTGKT.

Belongs to the ATPase alpha/beta chains family. F-type ATPases have 2 components, CF(1) - the catalytic core - and CF(0) - the membrane proton channel. CF(1) has five subunits: alpha(3), beta(3), gamma(1), delta(1), epsilon(1). CF(0) has three main subunits: a(1), b(2) and c(9-12). The alpha and beta chains form an alternating ring which encloses part of the gamma chain. CF(1) is attached to CF(0) by a central stalk formed by the gamma and epsilon chains, while a peripheral stalk is formed by the delta and b chains.

Its subcellular location is the cell inner membrane. It catalyses the reaction ATP + H2O + 4 H(+)(in) = ADP + phosphate + 5 H(+)(out). Produces ATP from ADP in the presence of a proton gradient across the membrane. The alpha chain is a regulatory subunit. In Verminephrobacter eiseniae (strain EF01-2), this protein is ATP synthase subunit alpha.